The primary structure comprises 565 residues: NAD-dependent malic enzyme (565 aa).

Tyr104 functions as the Proton donor in the catalytic mechanism. An NAD(+)-binding site is contributed by Arg157. The active-site Proton acceptor is Lys175. A divalent metal cation contacts are provided by Glu246, Asp247, and Asp270. Positions 270 and 418 each coordinate NAD(+).

The protein belongs to the malic enzymes family. As to quaternary structure, homotetramer. It depends on Mg(2+) as a cofactor. Mn(2+) is required as a cofactor.

The catalysed reaction is (S)-malate + NAD(+) = pyruvate + CO2 + NADH. It carries out the reaction oxaloacetate + H(+) = pyruvate + CO2. The chain is NAD-dependent malic enzyme from Pectobacterium atrosepticum (strain SCRI 1043 / ATCC BAA-672) (Erwinia carotovora subsp. atroseptica).